The following is a 986-amino-acid chain: Regulator of telomere elongation helicase 1 homolog (986 aa).

Residues 7-326 (AGIPVHFPFE…KEMLLELEKA (320 aa)) form the Helicase ATP-binding domain. 42–49 (SPTGTGKT) contacts ATP. [4Fe-4S] cluster-binding residues include C148, C166, C175, and C211. Residues 254-257 (DEGH) carry the DEAH box motif. A Phosphothreonine modification is found at T875.

It belongs to the helicase family. RAD3/XPD subfamily.

The protein resides in the nucleus. It catalyses the reaction ATP + H2O = ADP + phosphate + H(+). Functionally, a probable ATP-dependent DNA helicase implicated in DNA repair and the maintenance of genomic stability. Acts as an anti-recombinase to counteract toxic recombination and limit crossover during meiosis. Regulates meiotic recombination and crossover homeostasis by physically dissociating strand invasion events and thereby promotes noncrossover repair by meiotic synthesis dependent strand annealing (SDSA) as well as disassembly of D loop recombination intermediates. The chain is Regulator of telomere elongation helicase 1 homolog from Drosophila grimshawi (Hawaiian fruit fly).